Here is a 72-residue protein sequence, read N- to C-terminus: Translation initiation factor IF-1 (72 aa).

The region spanning 1–72 is the S1-like domain; sequence MSKSDIIEMQ…TRGRITWRAK (72 aa).

This sequence belongs to the IF-1 family. Component of the 30S ribosomal translation pre-initiation complex which assembles on the 30S ribosome in the order IF-2 and IF-3, IF-1 and N-formylmethionyl-tRNA(fMet); mRNA recruitment can occur at any time during PIC assembly.

It is found in the cytoplasm. Functionally, one of the essential components for the initiation of protein synthesis. Stabilizes the binding of IF-2 and IF-3 on the 30S subunit to which N-formylmethionyl-tRNA(fMet) subsequently binds. Helps modulate mRNA selection, yielding the 30S pre-initiation complex (PIC). Upon addition of the 50S ribosomal subunit IF-1, IF-2 and IF-3 are released leaving the mature 70S translation initiation complex. The polypeptide is Translation initiation factor IF-1 (Clostridium perfringens (strain 13 / Type A)).